A 437-amino-acid polypeptide reads, in one-letter code: Protein translocase subunit SecY (437 aa).

10 helical membrane passes run 19–39, 69–89, 122–142, 157–177, 189–209, 219–239, 275–295, 318–338, 378–398, and 400–420; these read LFTL…IPGV, LLQI…SIIL, VALA…GALF, IFTT…VMWL, GMSI…LWAI, WIEF…VVFV, GVIP…IVQF, HIIL…AISF, GSLY…GFGA, and QNFP…LETV.

It belongs to the SecY/SEC61-alpha family. In terms of assembly, component of the Sec protein translocase complex. Heterotrimer consisting of SecY, SecE and SecG subunits. The heterotrimers can form oligomers, although 1 heterotrimer is thought to be able to translocate proteins. Interacts with the ribosome. Interacts with SecDF, and other proteins may be involved. Interacts with SecA.

The protein localises to the cell membrane. In terms of biological role, the central subunit of the protein translocation channel SecYEG. Consists of two halves formed by TMs 1-5 and 6-10. These two domains form a lateral gate at the front which open onto the bilayer between TMs 2 and 7, and are clamped together by SecE at the back. The channel is closed by both a pore ring composed of hydrophobic SecY resides and a short helix (helix 2A) on the extracellular side of the membrane which forms a plug. The plug probably moves laterally to allow the channel to open. The ring and the pore may move independently. This is Protein translocase subunit SecY from Streptomyces lividans.